Consider the following 545-residue polypeptide: Inosine-5'-monophosphate dehydrogenase (545 aa).

CBS domains follow at residues 138-194 (MITD…DYDT) and 201-258 (MTKE…PDAT). NAD(+) is bound by residues Asp-295 and 347 to 349 (GIG). K(+)-binding residues include Gly-349 and Gly-351. Position 352 (Ser-352) interacts with IMP. Residue Cys-354 participates in K(+) binding. Catalysis depends on Cys-354, which acts as the Thioimidate intermediate. Residues 387–389 (DGG), 410–411 (GG), and 434–438 (YRGMG) each bind IMP. The Proton acceptor role is filled by Arg-455. Residue Glu-470 participates in IMP binding. K(+)-binding residues include Glu-524, Ser-525, and His-526.

It belongs to the IMPDH/GMPR family. As to quaternary structure, homotetramer. It depends on K(+) as a cofactor.

It carries out the reaction IMP + NAD(+) + H2O = XMP + NADH + H(+). It participates in purine metabolism; XMP biosynthesis via de novo pathway; XMP from IMP: step 1/1. Mycophenolic acid (MPA) is a non-competitive inhibitor that prevents formation of the closed enzyme conformation by binding to the same site as the amobile flap. In contrast, mizoribine monophosphate (MZP) is a competitive inhibitor that induces the closed conformation. MPA is a potent inhibitor of mammalian IMPDHs but a poor inhibitor of the bacterial enzymes. MZP is a more potent inhibitor of bacterial IMPDH. Catalyzes the conversion of inosine 5'-phosphate (IMP) to xanthosine 5'-phosphate (XMP), the first committed and rate-limiting step in the de novo synthesis of guanine nucleotides, and therefore plays an important role in the regulation of cell growth. The sequence is that of Inosine-5'-monophosphate dehydrogenase from Bifidobacterium longum (strain NCC 2705).